Reading from the N-terminus, the 908-residue chain is Glutamate receptor ionotropic, kainate 2 (908 aa).

The signal sequence occupies residues 1–31; it reads MQRIAGITKMVTHRRWLGLLLLLLCVGYSHG. Over 32–561 the chain is Extracellular; sequence MPHVLRFGGI…VFSFLNPLSP (530 aa). 7 N-linked (GlcNAc...) asparagine glycosylation sites follow: asparagine 67, asparagine 73, asparagine 275, asparagine 378, asparagine 412, asparagine 423, and asparagine 430. Cysteine 96 and cysteine 347 are joined by a disulfide. Residues proline 516, alanine 518, and arginine 523 each contribute to the L-glutamate site. Residue asparagine 546 is glycosylated (N-linked (GlcNAc...) asparagine). A helical membrane pass occupies residues 562–582; it reads DIWMYILLAYLGVSCVLFVIA. The Cytoplasmic portion of the chain corresponds to 583 to 638; that stretch reads RFSPYEWYNPHPCNPDSDVVENNFTLLNSFWFGVGALMQQGSELMPKALSTRIVGG. The chain crosses the membrane as a helical span at residues 639–659; it reads IWWFFTLIIISSYTANLAAFL. Residues 660-819 lie on the Extracellular side of the membrane; the sequence is TVERMESPID…KEASALGVQN (160 aa). L-glutamate-binding residues include serine 689, threonine 690, and glutamate 738. Residues cysteine 750 and cysteine 804 are joined by a disulfide bond. Asparagine 751 carries an N-linked (GlcNAc...) asparagine glycan. The chain crosses the membrane as a helical span at residues 820–840; the sequence is IGGIFIVLAAGLVLSVFVAVG. Over 841-908 the chain is Cytoplasmic; it reads EFLYKSKQNA…RRLPGKETMA (68 aa).

This sequence belongs to the glutamate-gated ion channel (TC 1.A.10.1) family. GRIK2 subfamily. As to quaternary structure, homotetramer and heterotetramer with GRIK5. Tetramers may be formed by the dimerization of dimers.

Its subcellular location is the cell membrane. The protein localises to the postsynaptic cell membrane. It carries out the reaction Ca(2+)(in) = Ca(2+)(out). It catalyses the reaction Na(+)(in) = Na(+)(out). Cold receptor activity activated by temperatures between 10-19 degrees Celsius. Ionotropic glutamate receptor that functions as a cation-permeable ligand-gated ion channel, gated by L-glutamate and the glutamatergic agonist kainic acid. L-glutamate acts as an excitatory neurotransmitter at many synapses in the central nervous system. Binding of the excitatory neurotransmitter L-glutamate induces a conformation change, leading to the opening of the cation channel, and thereby converts the chemical signal to an electrical impulse. The receptor then desensitizes rapidly and enters a transient inactive state, characterized by the presence of bound agonist. Functionally, independent of its ionotropic glutamate receptor activity, acts as a thermoreceptor conferring sensitivity to cold temperatures. Functions in dorsal root ganglion neurons. In Danio rerio (Zebrafish), this protein is Glutamate receptor ionotropic, kainate 2.